Here is a 155-residue protein sequence, read N- to C-terminus: Anaerobic ribonucleoside-triphosphate reductase-activating protein (155 aa).

3 residues coordinate [4Fe-4S] cluster: Cys-26, Cys-30, and Cys-33. S-adenosyl-L-methionine-binding positions include 32 to 34 (GCY) and Gly-74.

This sequence belongs to the organic radical-activating enzymes family. As to quaternary structure, forms a tetramer composed of two NrdD and two NrdG subunits. [4Fe-4S] cluster serves as cofactor.

It localises to the cytoplasm. The catalysed reaction is glycyl-[protein] + reduced [flavodoxin] + S-adenosyl-L-methionine = glycin-2-yl radical-[protein] + semiquinone [flavodoxin] + 5'-deoxyadenosine + L-methionine + H(+). Activation of anaerobic ribonucleoside-triphosphate reductase under anaerobic conditions by generation of an organic free radical, using S-adenosylmethionine and reduced flavodoxin as cosubstrates to produce 5'-deoxy-adenosine. The protein is Anaerobic ribonucleoside-triphosphate reductase-activating protein (nrdG) of Vibrio cholerae serotype O1 (strain ATCC 39315 / El Tor Inaba N16961).